A 210-amino-acid polypeptide reads, in one-letter code: ATP-dependent Clp protease proteolytic subunit (210 aa).

Ser-107 serves as the catalytic Nucleophile. The active site involves His-132.

Belongs to the peptidase S14 family. As to quaternary structure, fourteen ClpP subunits assemble into 2 heptameric rings which stack back to back to give a disk-like structure with a central cavity, resembling the structure of eukaryotic proteasomes.

It is found in the cytoplasm. The enzyme catalyses Hydrolysis of proteins to small peptides in the presence of ATP and magnesium. alpha-casein is the usual test substrate. In the absence of ATP, only oligopeptides shorter than five residues are hydrolyzed (such as succinyl-Leu-Tyr-|-NHMec, and Leu-Tyr-Leu-|-Tyr-Trp, in which cleavage of the -Tyr-|-Leu- and -Tyr-|-Trp bonds also occurs).. Its function is as follows. Cleaves peptides in various proteins in a process that requires ATP hydrolysis. Has a chymotrypsin-like activity. Plays a major role in the degradation of misfolded proteins. This is ATP-dependent Clp protease proteolytic subunit from Azorhizobium caulinodans (strain ATCC 43989 / DSM 5975 / JCM 20966 / LMG 6465 / NBRC 14845 / NCIMB 13405 / ORS 571).